The primary structure comprises 89 residues: Gibberellin-regulated protein 10 (89 aa).

The first 25 residues, M1–A25, serve as a signal peptide directing secretion.

It belongs to the GASA family. In terms of processing, six disulfide bonds may be present. Expressed in vasculature of rosette leaves and roots, cotyledon and root tips and developing seeds.

The protein localises to the secreted. Its function is as follows. Gibberellin-regulated protein that may function in hormonal controlled steps of development such as seed germination, flowering and seed maturation. This is Gibberellin-regulated protein 10 (GASA10) from Arabidopsis thaliana (Mouse-ear cress).